The chain runs to 222 residues: Cyclin-U2-1 (222 aa).

It belongs to the cyclin family. Cyclin U/P subfamily. In terms of assembly, interacts with CDKA-1. As to expression, expressed in roots, stems and flowers. Expressed in the shoot apex, leaf primordia and young leaves.

This Arabidopsis thaliana (Mouse-ear cress) protein is Cyclin-U2-1 (CYCU2-1).